A 592-amino-acid chain; its full sequence is uncharacterized protein (592 aa).

Positions 1–23 are cleaved as a signal peptide; the sequence is MRKAPLLRFTLASLALACSQAFA. The active-site Nucleophile is serine 37. Catalysis depends on residues aspartate 294 and histidine 297. The Autotransporter domain occupies 334–592; it reads HQDELRNQWQ…PDPGEPGGKP (259 aa). Positions 572–592 are disordered; sequence FTLTGYTPHTAPDPGEPGGKP.

This sequence belongs to the 'GDSL' lipolytic enzyme family.

This is an uncharacterized protein from Pseudomonas putida (Arthrobacter siderocapsulatus).